Consider the following 340-residue polypeptide: Glucokinase (340 aa).

Position 17–22 (17–22 (GDIGGT)) interacts with ATP.

It belongs to the bacterial glucokinase family.

The protein localises to the cytoplasm. The enzyme catalyses D-glucose + ATP = D-glucose 6-phosphate + ADP + H(+). This Allorhizobium ampelinum (strain ATCC BAA-846 / DSM 112012 / S4) (Agrobacterium vitis (strain S4)) protein is Glucokinase.